Consider the following 274-residue polypeptide: MATPTPFQSQIYRSLPEIERADAIVERISKAIALGLLKVGERLPPEAALSEMFGVGGATLREALSELRERGVVETRRGRSGGTFVVNQPEPETDIMREWFLSTSISEIRDIGDEHSAIAAATIRLACERAEAHDFDRLQELARALVLAETPETRASADSRFHIELAVSAQSPRLANAEIRLQEETVRQLWAPFTVAEAYDPERATAEHLELVRAVAQDQPERAQKLTLEHIRRNIFHLIDTKLVLGYAQSRPSSPATAPDGSSSAEAAMIQEGQ.

The region spanning 18-88 is the HTH gntR-type domain; the sequence is IERADAIVER…RSGGTFVVNQ (71 aa). Positions 46 to 65 form a DNA-binding region, H-T-H motif; that stretch reads EAALSEMFGVGGATLREALS. Polar residues predominate over residues 250–265; sequence SRPSSPATAPDGSSSA. The disordered stretch occupies residues 250–274; the sequence is SRPSSPATAPDGSSSAEAAMIQEGQ.

In terms of biological role, may regulate the transcription of the rmpAB operon. The sequence is that of Putative HTH-type transcriptional regulator RmpR (rmpR) from Mycobacterium gastri.